The following is a 169-amino-acid chain: Gametocyte-specific factor 1-like (169 aa).

2 CHHC U11-48K-type zinc fingers span residues Leu6–Asn33 and Met40–Ser67. Cys9, His15, His25, Cys29, Cys43, His49, His59, and Cys63 together coordinate Zn(2+). Disordered stretches follow at residues Ser67 to Pro103 and Ser131 to Ala169. Over residues Ser131–Glu158 the composition is skewed to basic and acidic residues.

The protein belongs to the UPF0224 (FAM112) family.

The polypeptide is Gametocyte-specific factor 1-like (GTSF1L) (Bos taurus (Bovine)).